A 374-amino-acid chain; its full sequence is MSSSSPGEPLEPTDQDLDVLLKNLGNLVTPMALRVAATLRLVDHLLAGADTLAGLADRTDTHPQALSRLVRHLTVVGVLEGGEKQGRPLRPTRLGMLLADGHPAQQRAWLDLNGAVSHADLAFTGLLDVVRTGRPAYAGRYGRPFWEDLSADVALADSFDALMSCDEDLAYEAPADAYDWSAVRHVLDVGGGNGGMLAAIALRAPHLRGTLVELAGPAERARRRFADAGLADRVTVAEGDFFKPLPVTADVVLLSFVLLNWSDEDALTILRGCVRALEPGGRLLVLDRADVEGDGADRFFSTLLDLRMLTFMGGRVRTRDEVVDLAGSAGLALASERTSGSTTLPFDFSILEFTAVSEEAAPAAQASEALPAQE.

Y171, G190, E213, D240, F241, and S255 together coordinate S-adenosyl-L-methionine.

The protein belongs to the class I-like SAM-binding methyltransferase superfamily. Cation-independent O-methyltransferase family. Homodimer. Homotetramer in solution. Tetramers might not be very stable in solution.

It catalyses the reaction 15-demethylaclacinomycin T + AH2 + O2 = 10-decarboxymethylaclacinomycin T + A + CO2 + H2O. The enzyme catalyses 10-carboxy-13-deoxycarminomycin + AH2 + O2 + H(+) = 10-hydroxy-13-deoxycarminomycin + A + CO2 + H2O. It carries out the reaction 10-hydroxy-13-deoxycarminomycin + S-adenosyl-L-methionine = 10-hydroxy-13-deoxydaunorubicin + S-adenosyl-L-homocysteine + H(+). It functions in the pathway antibiotic biosynthesis; rhodomycin biosynthesis. The protein operates within antibiotic biosynthesis; aclacinomycin biosynthesis. Its activity is regulated as follows. The hydroxylation reaction requires S-adenosyl-L-methionine (SAM) as a cofactor. S-adenosine-L-homocysteine and sinefungin (a SAM analog) can also support the decarboxylative hydroxylation activity with 10-carboxy-13-deoxycarminomycin as substrate. SAM and its analogs are considered an essential structural ligand to maintain ternary structural integrity and the proper binding mode and orientation of electron-rich substrates during decarboxylative hydroxylation of C-10 by RdmB. Involved in the biosynthesis of anthracyclines, an important group of aromatic polyketide antibiotics used in cancer chemotherapy. Acts as a 10-hydroxylase to catalyze a decarboxylative hydroxylation reaction on anthracyclines. During biosynthesis of rhodomycin, it catalyzes the removal of the carboxylic group at the C-10 position of 15-demethoxy-epsilon-rhodomycin coupled to hydroxylation at the same C-10 position to yield beta-rhodomycin. In vitro, can also catalyze the removal of the carboxylic group at the C-10 position of 15-demethoxyaclacinomycin T coupled to hydroxylation at the same C-10 position to yield 10-decarboxymethylaclacinomycin T. It can also use 10-carboxy-13-deoxycarminomycin, an analog of 15-demethoxy-epsilon-rhodomycin, to yield 10-hydroxy-13-deoxycarminomycin. In terms of biological role, in addition to its hydroxylation activity, it can act in vitro as a S-adenosyl-L-methionine-dependent O-methyltransferase and catalyze the 4-O-methylation of 10-hydroxy-13-deoxycarminomycin to 10-hydroxy-13-deoxydaunorubicin. The triglycosyl group of anthracyclines prevents the methylation reaction. The sequence is that of Aclacinomycin 10-hydroxylase RdmB from Streptomyces purpurascens.